Reading from the N-terminus, the 313-residue chain is tRNA dimethylallyltransferase (313 aa).

Residue 9-16 participates in ATP binding; sequence GPTAVGKT. Residue 11-16 coordinates substrate; that stretch reads TAVGKT. The tract at residues 34-37 is interaction with substrate tRNA; sequence DSMQ.

It belongs to the IPP transferase family. In terms of assembly, monomer. Requires Mg(2+) as cofactor.

It carries out the reaction adenosine(37) in tRNA + dimethylallyl diphosphate = N(6)-dimethylallyladenosine(37) in tRNA + diphosphate. Its function is as follows. Catalyzes the transfer of a dimethylallyl group onto the adenine at position 37 in tRNAs that read codons beginning with uridine, leading to the formation of N6-(dimethylallyl)adenosine (i(6)A). The protein is tRNA dimethylallyltransferase of Lachnoclostridium phytofermentans (strain ATCC 700394 / DSM 18823 / ISDg) (Clostridium phytofermentans).